A 94-amino-acid chain; its full sequence is MPSFWDSFAVYNRNKHAKGDVHGGHMSQNMGGQPMYLQAKEHADIKKKEDGTLEAKIETPDGPRLVDVSNMTQQEFERTYNSLRKGEPNNRVNF.

This sequence belongs to the SPG4 family.

Stationary phase-essential protein not required for growth on nonfermentable carbon sources. The polypeptide is Stationary phase protein 4 (SPG4) (Candida glabrata (strain ATCC 2001 / BCRC 20586 / JCM 3761 / NBRC 0622 / NRRL Y-65 / CBS 138) (Yeast)).